Here is a 71-residue protein sequence, read N- to C-terminus: Defensin-like protein 124 (71 aa).

A signal peptide spans 1–25 (MSKPTVIVIFMAILVLGMATKETQG). Intrachain disulfides connect Cys28–Cys71, Cys40–Cys60, Cys45–Cys65, and Cys49–Cys67.

This sequence belongs to the DEFL family.

The protein resides in the secreted. The polypeptide is Defensin-like protein 124 (LCR16) (Arabidopsis thaliana (Mouse-ear cress)).